A 459-amino-acid polypeptide reads, in one-letter code: Type I restriction enzyme HindI specificity subunit (459 aa).

This sequence belongs to the type-I restriction system S methylase family. As to quaternary structure, the type I restriction/modification system is composed of three polypeptides R, M and S; the restriction enzyme has stoichiometry R(2)M(2)S(1) while the methyltransferase is M(2)S(1).

Its function is as follows. The specificity (S) subunit of a type I restriction enzyme; this subunit dictates DNA sequence specificity. The M and S subunits together form a methyltransferase (MTase) that methylates adenosines in the sequence 5'-RAACN(5)TAG-3'. Methylation protects against cleavage by HindI. In the presence of the R subunit the complex can also act as an endonuclease, binding to the same target sequence but cutting the DNA some distance from this site. Whether the DNA is cut or modified depends on the methylation state of the target sequence. When the target site is unmodified, the DNA is cut. When the target site is hemimethylated, the complex acts as a maintenance MTase modifying the DNA so that both strands become methylated. After locating a non-methylated recognition site, the enzyme complex serves as a molecular motor that translocates DNA in an ATP-dependent manner until a collision occurs that triggers cleavage. This is Type I restriction enzyme HindI specificity subunit from Haemophilus influenzae (strain ATCC 51907 / DSM 11121 / KW20 / Rd).